A 132-amino-acid polypeptide reads, in one-letter code: Phycocyanin PC645 alpha-1 subunit (132 aa).

Aspartate 54 and arginine 68 together coordinate (2R,3E)-phycocyanobilin. Positions 70, 76, 77, and 92 each coordinate mesobiliverdin. Residues proline 123 and isoleucine 125 each contribute to the 15,16-dihydrobiliverdin site.

The protein belongs to the phycoerythrin family. Heterotetramer of 2 different alpha chains and 2 identical beta chains which form 2 alpha-beta heterodimers within the heterotetramer. In terms of processing, contains two phycocyanobilin chromophores, one mesobiliverdin chromophore and one 15,16-dihydrobiliverdin chromophore with binding mediated by both the alpha and beta subunits.

It localises to the plastid. The protein resides in the chloroplast thylakoid membrane. Light-harvesting photosynthetic tetrapyrrole chromophore-protein from the phycobiliprotein complex. This Chroomonas sp. (strain CCMP270) protein is Phycocyanin PC645 alpha-1 subunit.